The chain runs to 486 residues: Zinc transporter 6 (486 aa).

Over 1 to 60 (MVALDVLGITDSDAPVYRQKQEADTLVLGTIHPFRKAHRSVLGKLAQEFRLVTSDRRSWK) the chain is Cytoplasmic. A helical transmembrane segment spans residues 61-81 (ILLFGVLNVVCTGCLLMWCSS). Over 82–91 (TNSMALTAYT) the chain is Extracellular. A helical transmembrane segment spans residues 92–112 (YLTIFDLFSLITCLLSLWVTM). Topologically, residues 113 to 125 (KKPSQIYSFGFQR) are cytoplasmic. Residues 126–146 (FEVLAVFSSTVLVQLGSLFIL) traverse the membrane as a helical segment. Topologically, residues 147 to 161 (KESVERFVEQPEVHT) are extracellular. The helical transmembrane segment at 162–182 (GRLLVGTFVALFFNLLTLLSV) threads the bilayer. Residues 183–227 (KNKPFVFVSEAASTSWLQEHVADLSRSLCGLIPALSSFLLPRMNP) lie on the Cytoplasmic side of the membrane. The helical transmembrane segment at 228–248 (FVLINLAGAFALGITYMLIEI) threads the bilayer. Over 249–255 (NNYNAMD) the chain is Extracellular. Residues 256–276 (TASAVAIALMTFGTMYPMSVY) traverse the membrane as a helical segment. Over 277–486 (SGKVLLQTTP…SGTYTGPPRP (210 aa)) the chain is Cytoplasmic. Positions 394–411 (PSRAQGSEPTPATSTPAK) are enriched in low complexity. The tract at residues 394 to 425 (PSRAQGSEPTPATSTPAKPSSPPPEFSFHTPG) is disordered.

Belongs to the cation diffusion facilitator (CDF) transporter (TC 2.A.4) family. SLC30A subfamily. In terms of assembly, heterodimer with SLC30A5; form a functional zinc ion transmembrane transporter.

It is found in the golgi apparatus. The protein resides in the trans-Golgi network membrane. Its function is as follows. Has probably no intrinsic transporter activity but together with SLC30A5 forms a functional zinc ion:proton antiporter heterodimer, mediating zinc entry into the lumen of organelles along the secretory pathway. As part of that zinc ion:proton antiporter, contributes to zinc ion homeostasis within the early secretory pathway and regulates the activation and folding of enzymes like alkaline phosphatases and enzymes involved in phosphatidylinositol glycan anchor biosynthesis. This chain is Zinc transporter 6 (slc30a6), found in Danio rerio (Zebrafish).